The following is a 132-amino-acid chain: Transcription antitermination protein NusB (132 aa).

It belongs to the NusB family.

In terms of biological role, involved in transcription antitermination. Required for transcription of ribosomal RNA (rRNA) genes. Binds specifically to the boxA antiterminator sequence of the ribosomal RNA (rrn) operons. The protein is Transcription antitermination protein NusB of Campylobacter jejuni subsp. doylei (strain ATCC BAA-1458 / RM4099 / 269.97).